The chain runs to 253 residues: Acidic 26 kDa endochitinase (253 aa).

An N-terminal signal peptide occupies residues 1-24; sequence MKFNIVSPVALSCLFFLFLTGTLA. The Proton donor role is filled by E92. A disulfide bond links C212 and C244.

This sequence belongs to the glycosyl hydrolase 19 family. Chitinase class II subfamily.

The protein localises to the secreted. Its subcellular location is the extracellular space. The catalysed reaction is Random endo-hydrolysis of N-acetyl-beta-D-glucosaminide (1-&gt;4)-beta-linkages in chitin and chitodextrins.. In terms of biological role, defense against chitin-containing fungal pathogens. The chain is Acidic 26 kDa endochitinase (CHI3) from Solanum lycopersicum (Tomato).